The following is a 246-amino-acid chain: Probable transcriptional regulatory protein AHA_1522 (246 aa).

This sequence belongs to the TACO1 family.

The protein localises to the cytoplasm. The polypeptide is Probable transcriptional regulatory protein AHA_1522 (Aeromonas hydrophila subsp. hydrophila (strain ATCC 7966 / DSM 30187 / BCRC 13018 / CCUG 14551 / JCM 1027 / KCTC 2358 / NCIMB 9240 / NCTC 8049)).